Here is a 93-residue protein sequence, read N- to C-terminus: Beta-defensin 128 (93 aa).

An N-terminal signal peptide occupies residues 1 to 18; sequence MKLFLVLIILLFEVLTDG. 3 disulfides stabilise this stretch: Cys24–Cys52, Cys32–Cys46, and Cys36–Cys53.

The protein belongs to the beta-defensin family.

The protein resides in the secreted. In terms of biological role, has antibacterial activity. The chain is Beta-defensin 128 (DEFB128) from Homo sapiens (Human).